Here is an 805-residue protein sequence, read N- to C-terminus: Acetyl-CoA decarbonylase/synthase complex subunit alpha 2 (805 aa).

6 residues coordinate [4Fe-4S] cluster: Cys72, Cys75, Cys76, Cys78, Cys83, and Cys93. His116 contacts CO. 3 residues coordinate [Ni-4Fe-4S] cluster: His249, Cys277, and Cys322. 4Fe-4S ferredoxin-type domains follow at residues 407–435 (EEFKVYIDKCVKCGECMLACPEELDIPEA) and 445–474 (EYLEALHDVCIGCRRCEQVCKKEIPILNVL). 8 residues coordinate [4Fe-4S] cluster: Cys416, Cys419, Cys422, Cys426, Cys454, Cys457, Cys460, and Cys464. [Ni-4Fe-4S] cluster is bound by residues Cys522, Cys551, and Cys586.

The protein belongs to the Ni-containing carbon monoxide dehydrogenase family. As to quaternary structure, heterotetramer of two alpha and two epsilon subunits. The ACDS complex is made up of alpha, epsilon, beta, gamma and delta subunits with a probable stoichiometry of (alpha(2)epsilon(2))(4)-beta(8)-(gamma(1)delta(1))(8). [4Fe-4S] cluster serves as cofactor. The cofactor is [Ni-4Fe-4S] cluster.

The catalysed reaction is CO + 2 oxidized [2Fe-2S]-[ferredoxin] + H2O = 2 reduced [2Fe-2S]-[ferredoxin] + CO2 + 2 H(+). Its pathway is one-carbon metabolism; methanogenesis from acetate. Its function is as follows. Part of the ACDS complex that catalyzes the reversible cleavage of acetyl-CoA, allowing growth on acetate as sole source of carbon and energy. The alpha-epsilon subcomponent functions as a carbon monoxide dehydrogenase. This Methanosarcina acetivorans (strain ATCC 35395 / DSM 2834 / JCM 12185 / C2A) protein is Acetyl-CoA decarbonylase/synthase complex subunit alpha 2.